We begin with the raw amino-acid sequence, 266 residues long: Protein SCO2 homolog, mitochondrial (266 aa).

The transit peptide at 1–41 (MLLLTRSPTAWHRLSQLKPRVLPGTLGGQALHLRSWLLSRQ) directs the protein to the mitochondrion. At 42–60 (GPAETGGQGQPQGPGLRTR) the chain is on the mitochondrial matrix side. The helical transmembrane segment at 61 to 78 (LLITGLFGAGLGGAWLAL) threads the bilayer. The Mitochondrial intermembrane segment spans residues 79 to 266 (RAEKERLQQQ…HMAAFRSVLS (188 aa)). One can recognise a Thioredoxin domain in the interval 85–259 (LQQQKRTEAL…ISDSVRRHMA (175 aa)). Cu cation is bound by residues Cys-133, Cys-137, and His-224. Residues Cys-133 and Cys-137 are joined by a disulfide bond.

The protein belongs to the SCO1/2 family. As to quaternary structure, homodimer. Interacts with COA6. Found in a complex with TMEM177, COX20, COA6, MT-CO2/COX2, COX18 and SCO1. Interacts with TMEM177 in a COX20-dependent manner. Interacts with COX20 in a MT-CO2/COX2- and COX18-dependent manner. Interacts with COX16. As to expression, ubiquitous.

It is found in the mitochondrion inner membrane. Its function is as follows. Copper metallochaperone essential for the synthesis and maturation of cytochrome c oxidase subunit II (MT-CO2/COX2) by facilitating the incorporation of copper into the Cu(A) site of MT-CO2/COX2. Could also act as a thiol-disulfide oxidoreductase to regulate the redox state of the cysteines in SCO1 during maturation of MT-CO2/COX2. This Homo sapiens (Human) protein is Protein SCO2 homolog, mitochondrial (SCO2).